A 372-amino-acid polypeptide reads, in one-letter code: N-methyl-L-tryptophan oxidase (372 aa).

Aspartate 4–histidine 34 provides a ligand contact to FAD. Position 308 is an S-8alpha-FAD cysteine (cysteine 308).

Belongs to the MSOX/MTOX family. MTOX subfamily. Monomer. FAD is required as a cofactor.

The enzyme catalyses N(alpha)-methyl-L-tryptophan + O2 + H2O = L-tryptophan + formaldehyde + H2O2. Catalyzes the oxidative demethylation of N-methyl-L-tryptophan. The polypeptide is N-methyl-L-tryptophan oxidase (Shigella boydii serotype 18 (strain CDC 3083-94 / BS512)).